Reading from the N-terminus, the 403-residue chain is Aminomethyltransferase, mitochondrial (403 aa).

Residues 1 to 28 constitute a mitochondrion transit peptide; it reads MQRAMTVVPHLGLRLQALPLALGRPLSR. Substrate-binding residues include Glu232, Arg261, and Tyr399.

It belongs to the GcvT family. As to quaternary structure, the glycine cleavage system is composed of four proteins: P, T, L and H.

Its subcellular location is the mitochondrion. It carries out the reaction N(6)-[(R)-S(8)-aminomethyldihydrolipoyl]-L-lysyl-[protein] + (6S)-5,6,7,8-tetrahydrofolate = N(6)-[(R)-dihydrolipoyl]-L-lysyl-[protein] + (6R)-5,10-methylene-5,6,7,8-tetrahydrofolate + NH4(+). The glycine cleavage system catalyzes the degradation of glycine. The sequence is that of Aminomethyltransferase, mitochondrial from Canis lupus familiaris (Dog).